Reading from the N-terminus, the 556-residue chain is Formate--tetrahydrofolate ligase (556 aa).

65-72 (TPAGEGKT) serves as a coordination point for ATP.

This sequence belongs to the formate--tetrahydrofolate ligase family.

It carries out the reaction (6S)-5,6,7,8-tetrahydrofolate + formate + ATP = (6R)-10-formyltetrahydrofolate + ADP + phosphate. It functions in the pathway one-carbon metabolism; tetrahydrofolate interconversion. This is Formate--tetrahydrofolate ligase from Acetivibrio thermocellus (strain ATCC 27405 / DSM 1237 / JCM 9322 / NBRC 103400 / NCIMB 10682 / NRRL B-4536 / VPI 7372) (Clostridium thermocellum).